The sequence spans 218 residues: Radial spoke head 1 homolog (218 aa).

Residues M1 to Q13 are compositionally biased toward acidic residues. The disordered stretch occupies residues M1–E48. MORN repeat units lie at residues Y19 to T42, Y43 to R65, Y66 to K88, Y89 to T111, Y112 to S134, and Y158 to E180. Positions E20–G31 are enriched in basic and acidic residues.

In terms of assembly, component of the axonemal radial spoke complexes. Interacts with septin SEPT7. In terms of tissue distribution, testis-specific.

It is found in the cytoplasm. It localises to the cytoskeleton. The protein localises to the cilium axoneme. The protein resides in the flagellum basal body. Its subcellular location is the flagellum axoneme. In terms of biological role, functions as part of axonemal radial spoke complexes that play an important part in the motility of sperm and cilia. The sequence is that of Radial spoke head 1 homolog (rsph1) from Cyprinus carpio (Common carp).